The primary structure comprises 437 residues: Asparagine--tRNA ligase (437 aa).

Belongs to the class-II aminoacyl-tRNA synthetase family. Homodimer.

It is found in the cytoplasm. It catalyses the reaction tRNA(Asn) + L-asparagine + ATP = L-asparaginyl-tRNA(Asn) + AMP + diphosphate + H(+). This is Asparagine--tRNA ligase from Symbiobacterium thermophilum (strain DSM 24528 / JCM 14929 / IAM 14863 / T).